Consider the following 546-residue polypeptide: Protein FAM124A (546 aa).

3 disordered regions span residues 1 to 37, 286 to 360, and 488 to 546; these read MDPKAGGGGEEDDCVDSGAETGGSDYSHLSSTSSELS, FPKP…FQRS, and SSSS…EFYI. Low complexity predominate over residues 24–36; sequence SDYSHLSSTSSEL. The segment covering 286 to 302 has biased composition (basic residues); it reads FPKPGRVHHASEKKRHS. 2 stretches are compositionally biased toward polar residues: residues 304–324 and 347–360; these read PLPSTAVPSHTPGSSQQSPLN and ANSTPNPPWSFQRS. Positions 488 to 511 are enriched in low complexity; sequence SSSSATARAAPPAPSTSTLTDSSP.

Belongs to the FAM124 family.

The sequence is that of Protein FAM124A (FAM124A) from Homo sapiens (Human).